The following is a 130-amino-acid chain: uncharacterized protein (130 aa).

Residues 1-28 (MELAKERNGPHQKHHGQCQNHCTSPNTV) form a disordered region. A compositionally biased stretch (polar residues) spans 17-28 (QCQNHCTSPNTV).

This is an uncharacterized protein from Saccharomyces cerevisiae (strain ATCC 204508 / S288c) (Baker's yeast).